A 365-amino-acid polypeptide reads, in one-letter code: Mitogen-activated protein kinase 13 (365 aa).

Residues 25–308 (YVSPTHVGSG…AAQALTHPFF (284 aa)) form the Protein kinase domain. 31 to 39 (VGSGAYGSV) contacts ATP. Ser47 bears the Phosphoserine mark. Lys54 serves as a coordination point for ATP. Residue Asp150 is the Proton acceptor of the active site. Thr180 is modified (phosphothreonine; by MAP2K3, MAP2K4, MAP2K6 and MAP2K7). The TXY signature appears at 180–182 (TGY). Position 182 is a phosphotyrosine; by MAP2K3, MAP2K4, MAP2K6 and MAP2K7 (Tyr182). Phosphoserine is present on Ser350.

Belongs to the protein kinase superfamily. CMGC Ser/Thr protein kinase family. MAP kinase subfamily. In terms of assembly, interacts with MAPK8IP2. Requires Mg(2+) as cofactor. In terms of processing, dually phosphorylated on Thr-180 and Tyr-182 by MAP2K3/MKK3, MAP2K4/MKK4, MAP2K6/MKK6 and MAP2K7/MKK7, which activates the enzyme. Dephosphorylated by dual specificity phosphatase DUSP1. Expressed in testes, pancreas, small intestine, lung and kidney. Abundant in macrophages, also present in neutrophils, CD4+ T-cells, and endothelial cells.

The enzyme catalyses L-seryl-[protein] + ATP = O-phospho-L-seryl-[protein] + ADP + H(+). The catalysed reaction is L-threonyl-[protein] + ATP = O-phospho-L-threonyl-[protein] + ADP + H(+). Activated by phosphorylation on threonine and tyrosine by dual specificity kinases, MAP2K3/MKK3, MAP2K6/MKK6, MAP2K4/MKK4 and MAP2K7/MKK7. Activation by ultraviolet radiation, hyperosmotic shock, anisomycin or by TNF-alpha is mediated by MAP2K3/MKK3. Inhibited by dual specificity phosphatase DUSP1. Its function is as follows. Serine/threonine kinase which acts as an essential component of the MAP kinase signal transduction pathway. MAPK13 is one of the four p38 MAPKs which play an important role in the cascades of cellular responses evoked by extracellular stimuli such as pro-inflammatory cytokines or physical stress leading to direct activation of transcription factors such as ELK1 and ATF2. Accordingly, p38 MAPKs phosphorylate a broad range of proteins and it has been estimated that they may have approximately 200 to 300 substrates each. MAPK13 is one of the less studied p38 MAPK isoforms. Some of the targets are downstream kinases such as MAPKAPK2, which are activated through phosphorylation and further phosphorylate additional targets. Plays a role in the regulation of protein translation by phosphorylating and inactivating EEF2K. Involved in cytoskeletal remodeling through phosphorylation of MAPT and STMN1. Mediates UV irradiation induced up-regulation of the gene expression of CXCL14. Plays an important role in the regulation of epidermal keratinocyte differentiation, apoptosis and skin tumor development. Phosphorylates the transcriptional activator MYB in response to stress which leads to rapid MYB degradation via a proteasome-dependent pathway. MAPK13 also phosphorylates and down-regulates PRKD1 during regulation of insulin secretion in pancreatic beta cells. The sequence is that of Mitogen-activated protein kinase 13 (MAPK13) from Homo sapiens (Human).